The chain runs to 214 residues: Oxaloacetate tautomerase fahd-1, mitochondrial (214 aa).

The Mg(2+) site is built by E65, E67, and D96.

The protein belongs to the FAH family. It depends on Mg(2+) as a cofactor. Requires Mn(2+) as cofactor. As to expression, widely expressed.

It is found in the mitochondrion. The catalysed reaction is oxaloacetate = enol-oxaloacetate. Functionally, tautomerase that converts enol-oxaloacetate, a strong inhibitor of succinate dehydrogenase, to the physiological keto form of oxaloacetate. This chain is Oxaloacetate tautomerase fahd-1, mitochondrial, found in Caenorhabditis elegans.